The sequence spans 125 residues: Ribosome-binding factor A (125 aa).

Belongs to the RbfA family. As to quaternary structure, monomer. Binds 30S ribosomal subunits, but not 50S ribosomal subunits or 70S ribosomes.

It localises to the cytoplasm. Its function is as follows. One of several proteins that assist in the late maturation steps of the functional core of the 30S ribosomal subunit. Associates with free 30S ribosomal subunits (but not with 30S subunits that are part of 70S ribosomes or polysomes). Required for efficient processing of 16S rRNA. May interact with the 5'-terminal helix region of 16S rRNA. This is Ribosome-binding factor A from Xylella fastidiosa (strain 9a5c).